A 516-amino-acid polypeptide reads, in one-letter code: Serine carboxypeptidase II-3 (516 aa).

The signal sequence occupies residues 1 to 20; the sequence is MKCTVVALVLLVAVQCLVLG. Residues 21–77 constitute a propeptide that is removed on maturation; that stretch reads AGPAAAAKARRTRQGDYLNRLRGSPSSRASWESLAAVEEQTTTKAAGRPAPVAAAVE. 3 disulfide bridges follow: Cys-143/Cys-391, Cys-300/Cys-315, and Cys-339/Cys-359. N-linked (GlcNAc...) asparagine glycans are attached at residues Asn-194 and Asn-205. Ser-236 is an active-site residue. Asn-301 is a glycosylation site (N-linked (GlcNAc...) asparagine). Residues 342–352 constitute a propeptide, linker peptide; sequence EKLVTPPIAPS. N-linked (GlcNAc...) asparagine glycosylation is present at Asn-380. Residues Asp-427 and His-484 contribute to the active site.

It belongs to the peptidase S10 family. As to quaternary structure, carboxypeptidase II is a dimer, where each monomer is composed of two chains linked by a disulfide bond. In terms of processing, the linker peptide is endoproteolytically excised during enzyme maturation.

It catalyses the reaction Preferential release of a C-terminal arginine or lysine residue.. The polypeptide is Serine carboxypeptidase II-3 (CXP;2-3) (Hordeum vulgare (Barley)).